The primary structure comprises 469 residues: DNA-binding transcriptional regulator NtrC (469 aa).

Residues 5–119 (IVWVVDDDSS…EAVALVERAI (115 aa)) form the Response regulatory domain. Aspartate 54 carries the post-translational modification 4-aspartylphosphate. A Sigma-54 factor interaction domain is found at 140–369 (MIGEAPAMQD…LENTCRWLTV (230 aa)). ATP-binding positions include 168–175 (GESGTGKE) and 231–240 (ADGGTLFLDE). The segment at residues 445 to 464 (KQEAARLLGWGRNTLTRKLK) is a DNA-binding region (H-T-H motif).

Phosphorylated and dephosphorylated by NtrB.

Its subcellular location is the cytoplasm. Its function is as follows. Member of the two-component regulatory system NtrB/NtrC, which controls expression of the nitrogen-regulated (ntr) genes in response to nitrogen limitation. Phosphorylated NtrC binds directly to DNA and stimulates the formation of open promoter-sigma54-RNA polymerase complexes. The protein is DNA-binding transcriptional regulator NtrC (glnG) of Salmonella typhimurium (strain LT2 / SGSC1412 / ATCC 700720).